We begin with the raw amino-acid sequence, 156 residues long: dCTP deaminase (156 aa).

Residues 79-84 (RSSLAR), Asp95, Gln124, and Tyr138 contribute to the dCTP site.

It belongs to the dCTP deaminase family. In terms of assembly, homotrimer.

The enzyme catalyses dCTP + H2O + H(+) = dUTP + NH4(+). It functions in the pathway pyrimidine metabolism; dUMP biosynthesis; dUMP from dCTP (dUTP route): step 1/2. Its function is as follows. Catalyzes the deamination of dCTP to dUTP. This is dCTP deaminase from Pyrococcus horikoshii (strain ATCC 700860 / DSM 12428 / JCM 9974 / NBRC 100139 / OT-3).